A 212-amino-acid polypeptide reads, in one-letter code: Putative protein phosphatase 2C 53 (212 aa).

A PPM-type phosphatase domain is found at 1–208 (MEDRFSAITN…DDISVMLIPL (208 aa)). Position 199 (Asp199) interacts with Mn(2+).

The protein belongs to the PP2C family. The cofactor is Mg(2+). Requires Mn(2+) as cofactor.

The enzyme catalyses O-phospho-L-seryl-[protein] + H2O = L-seryl-[protein] + phosphate. It catalyses the reaction O-phospho-L-threonyl-[protein] + H2O = L-threonyl-[protein] + phosphate. This chain is Putative protein phosphatase 2C 53, found in Arabidopsis thaliana (Mouse-ear cress).